Reading from the N-terminus, the 580-residue chain is 2-isopropylmalate synthase (580 aa).

Residues 1 to 11 (MSATAFPTLST) show a composition bias toward polar residues. Positions 1-37 (MSATAFPTLSTPAGEIPATAPAWNRQRRSQMPSHRYR) are disordered. The region spanning 61-334 (PLWVPVDLRD…DPMIDFSDID (274 aa)) is the Pyruvate carboxyltransferase domain. The Mg(2+) site is built by D70, H273, H275, and N309. Residues 476–580 (EGEADAPQAD…ARAVAEVRPG (105 aa)) are regulatory domain.

It belongs to the alpha-IPM synthase/homocitrate synthase family. LeuA type 2 subfamily. In terms of assembly, homodimer. The cofactor is Mg(2+).

The protein resides in the cytoplasm. It carries out the reaction 3-methyl-2-oxobutanoate + acetyl-CoA + H2O = (2S)-2-isopropylmalate + CoA + H(+). It functions in the pathway amino-acid biosynthesis; L-leucine biosynthesis; L-leucine from 3-methyl-2-oxobutanoate: step 1/4. Its function is as follows. Catalyzes the condensation of the acetyl group of acetyl-CoA with 3-methyl-2-oxobutanoate (2-ketoisovalerate) to form 3-carboxy-3-hydroxy-4-methylpentanoate (2-isopropylmalate). In Nocardia farcinica (strain IFM 10152), this protein is 2-isopropylmalate synthase.